A 1376-amino-acid polypeptide reads, in one-letter code: MANTLVGRKRIRKFFGKIREVAEMPNLIEVQKASYDQFLMVDEPEGGRADEGLQSVFKSVFPISDFASTALLEFVRYTFEQPKYDVDECRQRGITFAAPLKVTLRLIVFDVDPDTGAKSVKDIKEQDVYMGDMPLMTDNGTFIVNGTERVIVSQMHRSPGVFFDHDKGKTHSSGKLLFAARIIPYRGSWLDVEFDAKDIVHVRIDRKRKLPVTSLLFALGLDGEEILSTFYNRVAYQRDGADWRVPFDAERLKGFKASVDLIDADSGEVVLEAGKKLNARNARLIGEKGTKFLRAADEDLIGQYIAEDLVNMKTGEIWAEAGDEISEKLLKSLDDVGVTELPVLDIDHVNVGPYIRNTLAVDKNSAREGALFDIYRVMRPGEPPTLDTAEAMFHSLFFDSERYDLSAVGRVKMNMRLDLDAADTVRTLRREDMLAVVKALVDLRDGKGEIDDIDHLGNRRVRSVGELMENQYRLGLLRMERAIKERMSSVDIDTVMPQDLINAKPAAAAVREFFGSSQLSQFMDQTNPLSEVTHKRRLSALGPGGLTRERAGFEVRDVHPTHYGRICPIETPEGPNIGLINSLATFARVNKYGFIETPFRRVKDGVVTDEVAYLSAMEEAKYYVAQANAGMDEGRKLTDDLVVCRRAGEVIVVAPDRVDLMDVSPKQLVSVAAALIPFLENDDANRALMGSNMQRQAVPLVRADAPFVGTGMEAVVARDSGAAIAARRSGIVDQVDATRIVIRASEETDPTKPGVDIYRLQKFQRSNQSTCITQKPLVRVGEPVKKGEIIADGPSTEFGELALGRNVLVAFMPWNGYNFEDSILLSERIVKDDVFTSIHIEEFEVMARDTKLGPEEITRDIPNVSEEALKNLDEAGIVYIGAEVHAGDILVGKITPKGESPMTPEEKLLRAIFGEKASDVRDTSLRVPPGVTGTIVEVRVFNRHGVDKDERAQAIEREEIERLAKDRDDEQTILDRNTYARLAEVLIGQSPIAGPKGFRKDTTLTREIISEYPRSQWWQFAVVDDRMMTEIEAMQKQYDESKKRLEQRFLDKVEKLQRGDELPPGVMKMVKVFVAVKRKIQPGDKMAGRHGNKGVVSRIVPIEDMPFLEDGTHADIVLNPLGVPSRMNVGQILETHLGWAAAGLGRKVSKAVDAYLKNQDIAPLRAEMEAIYSPSELEGLSDEALAEAGNNVRRGVPMATPVFNGAKEADIETMLEMAGLDRSAQSTLYDGRTGEPFDRKVTMGYIYMLKLHHLVDDKIHARSIGPYSLVTQQPLGGKAQFGGQRFGEMEVWALEAYGAAYTLQEMLTVKSDDVAGRTKVYEAIVRGDDTFEAGIPESFNVLVKEMRSLGLNVELTSSKQQQAANDQIEPPADAAE.

Belongs to the RNA polymerase beta chain family. As to quaternary structure, the RNAP catalytic core consists of 2 alpha, 1 beta, 1 beta' and 1 omega subunit. When a sigma factor is associated with the core the holoenzyme is formed, which can initiate transcription.

The enzyme catalyses RNA(n) + a ribonucleoside 5'-triphosphate = RNA(n+1) + diphosphate. Functionally, DNA-dependent RNA polymerase catalyzes the transcription of DNA into RNA using the four ribonucleoside triphosphates as substrates. In Methylorubrum extorquens (strain PA1) (Methylobacterium extorquens), this protein is DNA-directed RNA polymerase subunit beta.